Reading from the N-terminus, the 254-residue chain is Flavin-dependent thymidylate synthase (254 aa).

Residues 7-237 (LRVQLIARTE…PAVFADFEIY (231 aa)) enclose the ThyX domain. Residues Ser-71, 95 to 97 (RHR), and Gln-103 contribute to the FAD site. Residues 92–95 (ELIR), 103–107 (QLSQR), and Arg-176 contribute to the dUMP site. Residues 95 to 105 (RHRHFSYSQLS) carry the ThyX motif motif. FAD contacts are provided by residues 192 to 194 (NYR) and His-198. Arg-203 is a dUMP binding site. The Involved in ionization of N3 of dUMP, leading to its activation role is filled by Arg-203.

It belongs to the thymidylate synthase ThyX family. As to quaternary structure, homotetramer. Requires FAD as cofactor.

The catalysed reaction is dUMP + (6R)-5,10-methylene-5,6,7,8-tetrahydrofolate + NADPH + H(+) = dTMP + (6S)-5,6,7,8-tetrahydrofolate + NADP(+). It functions in the pathway pyrimidine metabolism; dTTP biosynthesis. Its function is as follows. Catalyzes the reductive methylation of 2'-deoxyuridine-5'-monophosphate (dUMP) to 2'-deoxythymidine-5'-monophosphate (dTMP) while utilizing 5,10-methylenetetrahydrofolate (mTHF) as the methyl donor, and NADPH and FADH(2) as the reductant. This is Flavin-dependent thymidylate synthase from Mycobacterium sp. (strain KMS).